The following is a 310-amino-acid chain: Tagatose-6-phosphate kinase (310 aa).

This sequence belongs to the carbohydrate kinase PfkB family. LacC subfamily.

It carries out the reaction D-tagatofuranose 6-phosphate + ATP = D-tagatofuranose 1,6-bisphosphate + ADP + H(+). It functions in the pathway carbohydrate metabolism; D-tagatose 6-phosphate degradation; D-glyceraldehyde 3-phosphate and glycerone phosphate from D-tagatose 6-phosphate: step 1/2. The protein is Tagatose-6-phosphate kinase of Staphylococcus aureus (strain bovine RF122 / ET3-1).